The chain runs to 470 residues: 63 kDa sperm flagellar membrane protein (470 aa).

The signal sequence occupies residues 1 to 25 (MFCHLHCMLVVFSLLLTLTGSFVNA). The EGF-like 1 domain maps to 41-80 (PPDPCASNPCTIASTHCVAAGESHTCECRPGYFETNGNCT). Intrachain disulfides connect cysteine 45–cysteine 57, cysteine 50–cysteine 66, and cysteine 68–cysteine 79. N-linked (GlcNAc...) asparagine glycosylation is found at asparagine 78, asparagine 170, and asparagine 219. The 125-residue stretch at 81-205 (VAQQFAGSFS…STITVSDFDE (125 aa)) folds into the SEA domain. Residues 202-250 (DFDECASADDNDCDPNANCTNTAGSFTCECDTELYDNSPNTEEPGRVCI) form the EGF-like 2; calcium-binding domain. 6 disulfide bridges follow: cysteine 206–cysteine 220, cysteine 214–cysteine 229, cysteine 231–cysteine 249, cysteine 253–cysteine 265, cysteine 258–cysteine 277, and cysteine 279–cysteine 291. One can recognise an EGF-like 3 domain in the interval 249–292 (CIAPCDPGLCTRPNEICNNGGTIEDDNLCKCIEGYDYTQYGDCD). Asparagine 322 carries an N-linked (GlcNAc...) asparagine glycan. Glycine 446 carries GPI-anchor amidated glycine lipidation. The propeptide at 447 to 470 (SQRHLPVCGVLSLVVTTLLALMLH) is removed in mature form.

As to expression, sperm.

The protein localises to the cell projection. Its subcellular location is the cilium. It is found in the flagellum membrane. The polypeptide is 63 kDa sperm flagellar membrane protein (Strongylocentrotus purpuratus (Purple sea urchin)).